A 263-amino-acid polypeptide reads, in one-letter code: tRNA pseudouridine synthase A (263 aa).

Catalysis depends on aspartate 51, which acts as the Nucleophile. Residue tyrosine 109 coordinates substrate.

This sequence belongs to the tRNA pseudouridine synthase TruA family. As to quaternary structure, homodimer.

The catalysed reaction is uridine(38/39/40) in tRNA = pseudouridine(38/39/40) in tRNA. Formation of pseudouridine at positions 38, 39 and 40 in the anticodon stem and loop of transfer RNAs. The chain is tRNA pseudouridine synthase A from Mannheimia succiniciproducens (strain KCTC 0769BP / MBEL55E).